Here is a 149-residue protein sequence, read N- to C-terminus: MLAVFEQSIGRPPPELSLPQAGIQKKEAKTREEIAESFKTWKQDSTFYHLFNGNFMAFSHGNENPLQPRSIVVMDDVFCIFSGALDNTFDLRKHYGLSRQATEAMIMVEAYKVLRDRAPYPPDQVIKELEGKFAFILFDSKASTLFLAR.

As to expression, stem-specific (active at lower levels in other organs).

This Nicotiana tabacum (Common tobacco) protein is Stem-specific protein TSJT1 (TSJT1).